Here is a 211-residue protein sequence, read N- to C-terminus: LexA repressor (211 aa).

Residues 30 to 50 constitute a DNA-binding region (H-T-H motif); sequence RVEIAREIGFKSPNAAEEHLK. Residues Ser-128 and Lys-165 each act as for autocatalytic cleavage activity in the active site.

Belongs to the peptidase S24 family. Homodimer.

The catalysed reaction is Hydrolysis of Ala-|-Gly bond in repressor LexA.. In terms of biological role, represses a number of genes involved in the response to DNA damage (SOS response), including recA and lexA. In the presence of single-stranded DNA, RecA interacts with LexA causing an autocatalytic cleavage which disrupts the DNA-binding part of LexA, leading to derepression of the SOS regulon and eventually DNA repair. The chain is LexA repressor from Haemophilus ducreyi (strain 35000HP / ATCC 700724).